The primary structure comprises 427 residues: Acetylornithine aminotransferase, mitochondrial (427 aa).

Residue lysine 279 is modified to N6-(pyridoxal phosphate)lysine.

Belongs to the class-III pyridoxal-phosphate-dependent aminotransferase family. The cofactor is pyridoxal 5'-phosphate.

The protein resides in the mitochondrion matrix. The enzyme catalyses N(2)-acetyl-L-ornithine + 2-oxoglutarate = N-acetyl-L-glutamate 5-semialdehyde + L-glutamate. It participates in amino-acid biosynthesis; L-arginine biosynthesis; N(2)-acetyl-L-ornithine from L-glutamate: step 4/4. This Candida glabrata (strain ATCC 2001 / BCRC 20586 / JCM 3761 / NBRC 0622 / NRRL Y-65 / CBS 138) (Yeast) protein is Acetylornithine aminotransferase, mitochondrial (ARG8).